The primary structure comprises 75 residues: Large ribosomal subunit protein bL31 (75 aa).

Belongs to the bacterial ribosomal protein bL31 family. Type A subfamily. In terms of assembly, part of the 50S ribosomal subunit.

Binds the 23S rRNA. The protein is Large ribosomal subunit protein bL31 of Chlorobium phaeobacteroides (strain BS1).